Here is a 942-residue protein sequence, read N- to C-terminus: Protein FAM184B (942 aa).

2 disordered regions span residues 1 to 26 (MASA…RGGS) and 73 to 97 (QEDL…TSED). Coiled coils occupy residues 89 to 150 (QEQS…RVLI), 196 to 337 (EMHQ…DRLM), and 387 to 495 (SETQ…SLLE). The interval 486-542 (STKLQNSLLEDPCSRPKKPARDEGLEKLTDEEESSSDEEERTGESVKGKSDLQPPFE) is disordered. A compositionally biased stretch (basic and acidic residues) spans 504–513 (PARDEGLEKL). The span at 514-526 (TDEEESSSDEEER) shows a compositional bias: acidic residues. Coiled-coil stretches lie at residues 575–619 (NKDS…ESLR) and 686–815 (EKGL…ERRF). The segment at 880 to 934 (APPITKSPSLDPSPSCSQPYKPTQLLDGKTASRTQDGEPAQPKEAPQKQGSPHQE) is disordered. The segment covering 885-900 (KSPSLDPSPSCSQPYK) has biased composition (polar residues).

The protein belongs to the FAM184 family.

The sequence is that of Protein FAM184B (Fam184b) from Mus musculus (Mouse).